Here is a 397-residue protein sequence, read N- to C-terminus: Cephalotocin receptor 1 (397 aa).

Residues 1 to 48 (MRYITTHPNEISTQIWNNFSSTEIWSNFSAAKNETQPIRRNQDLANAE) are Extracellular-facing. N-linked (GlcNAc...) asparagine glycosylation is found at N18, N27, and N33. Residues 49-69 (VITLAVVIIITVIGNSIVLIT) form a helical membrane-spanning segment. The Cytoplasmic portion of the chain corresponds to 70–91 (LFQRRKKLTRMHLFILHLSVTD). A helical transmembrane segment spans residues 92–112 (LFVAFFNNLPQMIWDITFLFL). The Extracellular segment spans residues 113–120 (GTDLLCRL). C118 and C194 are joined by a disulfide. Residues 121-141 (VTYLQSVAMYASSYVLVATAI) traverse the membrane as a helical segment. At 142-162 (DRYFAICHPLSSHKWTTARVH) the chain is on the cytoplasmic side. The chain crosses the membrane as a helical span at residues 163-183 (VMVFIAWMLSFLFSTPQLFIW). Over 184–205 (SMQFSNIGLTCQATFDPEWTLK) the chain is Extracellular. The helical transmembrane segment at 206-226 (FYITWLTVAIWILPTIALTLF) threads the bilayer. Over 227-293 (YGMMCFAVWK…RGISRAKVRS (67 aa)) the chain is Cytoplasmic. The chain crosses the membrane as a helical span at residues 294–314 (VALTLSVVACCFICWSPFFVC). The Extracellular segment spans residues 315–331 (QMWAAWDENAPYSGAIY). A helical transmembrane segment spans residues 332–352 (TILLLLSSLNSCTNPWIYMIF). Residues 353–397 (SVFQHRAKTSRFVNDEETTSVTVLSSRNDIRLMSMKKKLEQTARN) are Cytoplasmic-facing.

This sequence belongs to the G-protein coupled receptor 1 family. Vasopressin/oxytocin receptor subfamily. In terms of tissue distribution, present in brain, buccal ganglion, gastric ganglion, olfactory lube, peduncle lobe, optical lobe, pancreas, the oviduct and the ovary.

The protein resides in the cell membrane. Functionally, acts as a receptor for cephalotocin. The sequence is that of Cephalotocin receptor 1 from Octopus vulgaris (Common octopus).